Here is a 189-residue protein sequence, read N- to C-terminus: Elongation factor P (189 aa).

Lysine 34 is subject to N6-(3,6-diaminohexanoyl)-5-hydroxylysine.

It belongs to the elongation factor P family. Post-translationally, may be beta-lysylated on the epsilon-amino group of Lys-34 by the combined action of EpmA and EpmB, and then hydroxylated on the C5 position of the same residue by EpmC (if this protein is present). Lysylation is critical for the stimulatory effect of EF-P on peptide-bond formation. The lysylation moiety may extend toward the peptidyltransferase center and stabilize the terminal 3-CCA end of the tRNA. Hydroxylation of the C5 position on Lys-34 may allow additional potential stabilizing hydrogen-bond interactions with the P-tRNA.

It is found in the cytoplasm. Its pathway is protein biosynthesis; polypeptide chain elongation. In terms of biological role, involved in peptide bond synthesis. Alleviates ribosome stalling that occurs when 3 or more consecutive Pro residues or the sequence PPG is present in a protein, possibly by augmenting the peptidyl transferase activity of the ribosome. Modification of Lys-34 is required for alleviation. This Francisella tularensis subsp. tularensis (strain FSC 198) protein is Elongation factor P.